We begin with the raw amino-acid sequence, 262 residues long: 14-3-3-like protein GF14-E (262 aa).

This sequence belongs to the 14-3-3 family. Ubiquitous.

The protein localises to the cytoplasm. It is found in the nucleus. Is associated with a DNA binding complex that binds to the G box, a well-characterized cis-acting DNA regulatory element found in plant genes. The polypeptide is 14-3-3-like protein GF14-E (GF14E) (Oryza sativa subsp. japonica (Rice)).